Consider the following 190-residue polypeptide: Homeobox protein SEBOX (190 aa).

Over residues 1 to 11 the composition is skewed to low complexity; it reads MPSPVDASSAD. Disordered regions lie at residues 1 to 24 and 82 to 161; these read MPSPVDASSADGGSGLGSHRRKRT and ILSP…VHPS. Positions 19–78 form a DNA-binding region, homeobox; that stretch reads HRRKRTTFSKGQLLELERAFAAWPYPNISTHEHLAWVTCLPEAKVQVWFQKRWAKIIKNR. Positions 89 to 100 are enriched in polar residues; sequence CPQSSCSLPDTL.

It belongs to the paired homeobox family.

It localises to the nucleus. In terms of biological role, probable transcription factor involved in the control of specification of mesoderm and endoderm. The protein is Homeobox protein SEBOX (SEBOX) of Homo sapiens (Human).